Consider the following 226-residue polypeptide: ATP synthase subunit a (226 aa).

5 consecutive transmembrane segments (helical) span residues 20-40 (LNWLSTFLGLLLIPFSFWLLP), 74-94 (FISLFSLIMFNNFLGLFPYIF), 100-120 (LTLTLALAFPLWLSFMLYGWI), 158-180 (LAVRLTANMIAGHLLLTLLGNTG), and 197-217 (IALLVLESAVAIIQSYVFAVL).

Belongs to the ATPase A chain family. In terms of assembly, F-type ATPases have 2 components, CF(1) - the catalytic core - and CF(0) - the membrane proton channel. CF(1) has five subunits: alpha(3), beta(3), gamma(1), delta(1), epsilon(1). CF(0) has three main subunits: a, b and c.

It localises to the mitochondrion inner membrane. Mitochondrial membrane ATP synthase (F(1)F(0) ATP synthase or Complex V) produces ATP from ADP in the presence of a proton gradient across the membrane which is generated by electron transport complexes of the respiratory chain. F-type ATPases consist of two structural domains, F(1) - containing the extramembraneous catalytic core and F(0) - containing the membrane proton channel, linked together by a central stalk and a peripheral stalk. During catalysis, ATP synthesis in the catalytic domain of F(1) is coupled via a rotary mechanism of the central stalk subunits to proton translocation. Key component of the proton channel; it may play a direct role in the translocation of protons across the membrane. The sequence is that of ATP synthase subunit a (ATP6) from Anopheles quadrimaculatus (Common malaria mosquito).